Here is a 110-residue protein sequence, read N- to C-terminus: Large ribosomal subunit protein P1 (110 aa).

The interval 87 to 110 (PAAEEKKEEEKEESDEDMGFGLFD) is disordered.

The protein belongs to the eukaryotic ribosomal protein P1/P2 family. P1 and P2 exist as dimers at the large ribosomal subunit. In terms of processing, phosphorylated.

Plays an important role in the elongation step of protein synthesis. The chain is Large ribosomal subunit protein P1 (ALTA12) from Alternaria alternata (Alternaria rot fungus).